A 433-amino-acid polypeptide reads, in one-letter code: GTPase Obg (433 aa).

The 159-residue stretch at 1–159 (MGLTDYCECR…LHVSLEIKYL (159 aa)) folds into the Obg domain. The OBG-type G domain maps to 160–329 (ANVGIVGFPN…LVAQVFALHQ (170 aa)). Residues 166–173 (GFPNTGKS), 191–195 (FTTLV), 212–215 (DIPG), 282–285 (NKTD), and 310–312 (ISA) each bind GTP. Residues Ser173 and Thr193 each coordinate Mg(2+). An OCT domain is found at 355–433 (ASETDHDPLN…FAGQEFVIND (79 aa)).

The protein belongs to the TRAFAC class OBG-HflX-like GTPase superfamily. OBG GTPase family. Monomer. The cofactor is Mg(2+).

It is found in the cytoplasm. Its function is as follows. An essential GTPase which binds GTP, GDP and possibly (p)ppGpp with moderate affinity, with high nucleotide exchange rates and a fairly low GTP hydrolysis rate. Plays a role in control of the cell cycle, stress response, ribosome biogenesis and in those bacteria that undergo differentiation, in morphogenesis control. This Mycoplasma pneumoniae (strain ATCC 29342 / M129 / Subtype 1) (Mycoplasmoides pneumoniae) protein is GTPase Obg.